The primary structure comprises 223 residues: Urease accessory protein UreF (223 aa).

The protein belongs to the UreF family. UreD, UreF and UreG form a complex that acts as a GTP-hydrolysis-dependent molecular chaperone, activating the urease apoprotein by helping to assemble the nickel containing metallocenter of UreC. The UreE protein probably delivers the nickel.

The protein resides in the cytoplasm. Its function is as follows. Required for maturation of urease via the functional incorporation of the urease nickel metallocenter. The chain is Urease accessory protein UreF from Rhizobium johnstonii (strain DSM 114642 / LMG 32736 / 3841) (Rhizobium leguminosarum bv. viciae).